A 62-amino-acid chain; its full sequence is Photosystem II reaction center protein K (62 aa).

The propeptide occupies 1 to 25 (MPNILSLTCICFNSVLYPTTSFFFA). Residues 33–53 (IFNPIVDVMPVIPLFFFLLAF) traverse the membrane as a helical segment.

Belongs to the PsbK family. PSII is composed of 1 copy each of membrane proteins PsbA, PsbB, PsbC, PsbD, PsbE, PsbF, PsbH, PsbI, PsbJ, PsbK, PsbL, PsbM, PsbT, PsbX, PsbY, PsbZ, Psb30/Ycf12, at least 3 peripheral proteins of the oxygen-evolving complex and a large number of cofactors. It forms dimeric complexes.

It localises to the plastid. Its subcellular location is the chloroplast thylakoid membrane. Its function is as follows. One of the components of the core complex of photosystem II (PSII). PSII is a light-driven water:plastoquinone oxidoreductase that uses light energy to abstract electrons from H(2)O, generating O(2) and a proton gradient subsequently used for ATP formation. It consists of a core antenna complex that captures photons, and an electron transfer chain that converts photonic excitation into a charge separation. In Agrostis stolonifera (Creeping bentgrass), this protein is Photosystem II reaction center protein K.